The sequence spans 372 residues: N-methyl-L-tryptophan oxidase (372 aa).

Residue 4-34 (DLIIIGSGSVGAAAGYYATRAGLNVLMTDAH) participates in FAD binding. At C308 the chain carries S-8alpha-FAD cysteine.

It belongs to the MSOX/MTOX family. MTOX subfamily. Monomer. The cofactor is FAD.

It catalyses the reaction N(alpha)-methyl-L-tryptophan + O2 + H2O = L-tryptophan + formaldehyde + H2O2. Catalyzes the oxidative demethylation of N-methyl-L-tryptophan. This Escherichia coli O81 (strain ED1a) protein is N-methyl-L-tryptophan oxidase.